Here is a 427-residue protein sequence, read N- to C-terminus: Light-independent protochlorophyllide reductase subunit N (427 aa).

[4Fe-4S] cluster-binding residues include Cys32, Cys57, and Cys118.

This sequence belongs to the BchN/ChlN family. Protochlorophyllide reductase is composed of three subunits; BchL, BchN and BchB. Forms a heterotetramer of two BchB and two BchN subunits. Requires [4Fe-4S] cluster as cofactor.

It catalyses the reaction chlorophyllide a + oxidized 2[4Fe-4S]-[ferredoxin] + 2 ADP + 2 phosphate = protochlorophyllide a + reduced 2[4Fe-4S]-[ferredoxin] + 2 ATP + 2 H2O. It functions in the pathway porphyrin-containing compound metabolism; bacteriochlorophyll biosynthesis (light-independent). Functionally, component of the dark-operative protochlorophyllide reductase (DPOR) that uses Mg-ATP and reduced ferredoxin to reduce ring D of protochlorophyllide (Pchlide) to form chlorophyllide a (Chlide). This reaction is light-independent. The NB-protein (BchN-BchB) is the catalytic component of the complex. The sequence is that of Light-independent protochlorophyllide reductase subunit N from Rubrivivax gelatinosus (strain NBRC 100245 / IL144).